The chain runs to 292 residues: MQPLNMAEILDHRGVLTDGDDGPFRNLTNFYDMFSSNFPEGLRVLVFDEDPSYLLILERHLQKFQYQVTICNEVNKAMHTLRNHRNRFDLAMIQVNNAEGDIFRFLSEIGSEMDLPIIIISEDDSVKSVKKWMINGAADYLIKPIRPEDLRIVFKHLVKKMRERRSVVTGEAEKAAGEKSSSVGDSTIRNPNKSKRSSCLEAEVNEEDRHDHNDRACASSAKKRRVVWDEELHQNFLNAVDFLGLERAVPKKILDVMKVDYISRENVASHLQVTFLIYNIIVHFQQHFCFYS.

In terms of domain architecture, Response regulatory spans 43 to 158 (RVLVFDEDPS…DLRIVFKHLV (116 aa)). Residues 168 to 215 (VTGEAEKAAGEKSSSVGDSTIRNPNKSKRSSCLEAEVNEEDRHDHNDR) form a disordered region. The segment covering 179–191 (KSSSVGDSTIRNP) has biased composition (polar residues). Positions 225–275 (RVVWDEELHQNFLNAVDFLGLERAVPKKILDVMKVDYISRENVASHLQVTF) form a DNA-binding region, myb-like GARP.

This sequence belongs to the ARR-like family. Binds the target DNA as a monomer.

The protein resides in the nucleus. Functionally, transcriptional activator that binds specifically to the DNA sequence 5'-[AG]GATT-3'. This chain is Putative two-component response regulator-like APRR4 (APRR4), found in Arabidopsis thaliana (Mouse-ear cress).